A 138-amino-acid chain; its full sequence is MSIVNSELDKSISTHIINNTNIIMAHYCNGSCAHNAYHTGYDKGMAVGMLAQQLLQSACPPVGVRTSYDLWGTVQPVRRYTCSYQCPYAGGAECSMCFARRVNPSGSPTYNPGQNSAPTILLSLAPGTSLSIGGIKYI.

This is an uncharacterized protein from Acanthamoeba polyphaga (Amoeba).